Reading from the N-terminus, the 488-residue chain is Probable Xaa-Pro aminopeptidase ATEG_00858 (488 aa).

Residues aspartate 273, aspartate 284, glutamate 417, and glutamate 456 each contribute to the Mn(2+) site.

This sequence belongs to the peptidase M24B family. The cofactor is Mn(2+).

The catalysed reaction is Release of any N-terminal amino acid, including proline, that is linked to proline, even from a dipeptide or tripeptide.. Its function is as follows. Catalyzes the removal of a penultimate prolyl residue from the N-termini of peptides. The sequence is that of Probable Xaa-Pro aminopeptidase ATEG_00858 from Aspergillus terreus (strain NIH 2624 / FGSC A1156).